An 89-amino-acid polypeptide reads, in one-letter code: MSLSFNTKAKIIADFGRNNYDSGSTAVQIALLTAQINHLQDHFAVHKKDHHSRRGLLRIVSQRRKLLVYFKNKDLASYTDLIERLNLRR.

The protein belongs to the universal ribosomal protein uS15 family. As to quaternary structure, part of the 30S ribosomal subunit. Forms a bridge to the 50S subunit in the 70S ribosome, contacting the 23S rRNA.

Functionally, one of the primary rRNA binding proteins, it binds directly to 16S rRNA where it helps nucleate assembly of the platform of the 30S subunit by binding and bridging several RNA helices of the 16S rRNA. In terms of biological role, forms an intersubunit bridge (bridge B4) with the 23S rRNA of the 50S subunit in the ribosome. This is Small ribosomal subunit protein uS15 from Baumannia cicadellinicola subsp. Homalodisca coagulata.